The following is a 435-amino-acid chain: Eukaryotic peptide chain release factor subunit 1-3 (435 aa).

Ala-2 is subject to N-acetylalanine.

The protein belongs to the eukaryotic release factor 1 family. As to quaternary structure, heterodimer of two subunits, one of which binds GTP.

It localises to the cytoplasm. Its function is as follows. Directs the termination of nascent peptide synthesis (translation) in response to the termination codons UAA, UAG and UGA. Modulates plant growth and development. This chain is Eukaryotic peptide chain release factor subunit 1-3, found in Brassica oleracea var. botrytis (Cauliflower).